The chain runs to 96 residues: Aspartyl/glutamyl-tRNA(Asn/Gln) amidotransferase subunit C (96 aa).

The protein belongs to the GatC family. As to quaternary structure, heterotrimer of A, B and C subunits.

The enzyme catalyses L-glutamyl-tRNA(Gln) + L-glutamine + ATP + H2O = L-glutaminyl-tRNA(Gln) + L-glutamate + ADP + phosphate + H(+). The catalysed reaction is L-aspartyl-tRNA(Asn) + L-glutamine + ATP + H2O = L-asparaginyl-tRNA(Asn) + L-glutamate + ADP + phosphate + 2 H(+). Its function is as follows. Allows the formation of correctly charged Asn-tRNA(Asn) or Gln-tRNA(Gln) through the transamidation of misacylated Asp-tRNA(Asn) or Glu-tRNA(Gln) in organisms which lack either or both of asparaginyl-tRNA or glutaminyl-tRNA synthetases. The reaction takes place in the presence of glutamine and ATP through an activated phospho-Asp-tRNA(Asn) or phospho-Glu-tRNA(Gln). In Chloroflexus aurantiacus (strain ATCC 29366 / DSM 635 / J-10-fl), this protein is Aspartyl/glutamyl-tRNA(Asn/Gln) amidotransferase subunit C.